The primary structure comprises 181 residues: Squamosa promoter-binding-like protein 5 (181 aa).

Positions 1 to 10 (MEGQRTQRRG) are enriched in basic residues. Residues 1 to 58 (MEGQRTQRRGYLKDKATVSNLVEEEMENGMDGEEEDGGDEDKRKKVMERVRGPSTDRV) are disordered. Acidic residues predominate over residues 22-39 (VEEEMENGMDGEEEDGGD). Positions 40-51 (EDKRKKVMERVR) are enriched in basic and acidic residues. The SBP-type zinc-finger motif lies at 60–137 (SRLCQVDRCT…AGHNERRRKI (78 aa)). Zn(2+) contacts are provided by C63, C68, C85, H88, C104, C107, H111, and C123. Residues 120-136 (KRSCRRRLAGHNERRRK) carry the Bipartite nuclear localization signal motif. Positions 128–181 (AGHNERRRKISGDSFGEGSGRRGFSGQLIQTQERNRVDRKLPMTNSSFKRPQIR) are disordered. Over residues 170-181 (MTNSSFKRPQIR) the composition is skewed to polar residues.

Zn(2+) serves as cofactor. In terms of tissue distribution, expressed in the inflorescence apical meristem and young flowers.

It localises to the nucleus. Its subcellular location is the cytoplasm. In terms of biological role, trans-acting factor that binds specifically to the consensus nucleotide sequence 5'-TNCGTACAA-3' of AP1 promoter. Promotes both vegetative phase change and flowering. The protein is Squamosa promoter-binding-like protein 5 (SPL5) of Arabidopsis thaliana (Mouse-ear cress).